The following is a 262-amino-acid chain: Snake venom serine protease catroxase-1 (262 aa).

Positions Met1–Ala18 are cleaved as a signal peptide. Positions Gln19 to Pro24 are excised as a propeptide. Residues Ile25 to Ala250 form the Peptidase S1 domain. 6 cysteine pairs are disulfide-bonded: Cys31/Cys162, Cys49/Cys65, Cys97/Cys257, Cys141/Cys211, Cys173/Cys190, and Cys201/Cys226. His64 serves as the catalytic Charge relay system. An N-linked (GlcNAc...) asparagine glycan is attached at Asn102. The active-site Charge relay system is Asp109. A glycan (N-linked (GlcNAc...) asparagine) is linked at Asn169. Residue Ser205 is the Charge relay system of the active site.

This sequence belongs to the peptidase S1 family. Snake venom subfamily. As to quaternary structure, monomer. In terms of tissue distribution, expressed by the venom gland.

Its subcellular location is the secreted. Its function is as follows. Snake venom serine protease that may act in the hemostasis system of the prey. The chain is Snake venom serine protease catroxase-1 from Crotalus atrox (Western diamondback rattlesnake).